Reading from the N-terminus, the 922-residue chain is Isoleucine--tRNA ligase (922 aa).

The short motif at 57 to 67 (PYANGDIHLGH) is the 'HIGH' region element. An L-isoleucyl-5'-AMP-binding site is contributed by Glu553. The short motif at 594–598 (KMSKS) is the 'KMSKS' region element. Lys597 provides a ligand contact to ATP. Residues Cys892, Cys895, Cys912, and Cys915 each contribute to the Zn(2+) site.

It belongs to the class-I aminoacyl-tRNA synthetase family. IleS type 1 subfamily. As to quaternary structure, monomer. Requires Zn(2+) as cofactor.

It localises to the cytoplasm. The catalysed reaction is tRNA(Ile) + L-isoleucine + ATP = L-isoleucyl-tRNA(Ile) + AMP + diphosphate. Functionally, catalyzes the attachment of isoleucine to tRNA(Ile). As IleRS can inadvertently accommodate and process structurally similar amino acids such as valine, to avoid such errors it has two additional distinct tRNA(Ile)-dependent editing activities. One activity is designated as 'pretransfer' editing and involves the hydrolysis of activated Val-AMP. The other activity is designated 'posttransfer' editing and involves deacylation of mischarged Val-tRNA(Ile). The chain is Isoleucine--tRNA ligase from Desulfitobacterium hafniense (strain Y51).